A 155-amino-acid chain; its full sequence is Large ribosomal subunit protein uL15 (155 aa).

Positions 1–13 (MKLNELRDCEGAT) are enriched in basic and acidic residues. Positions 1 to 47 (MKLNELRDCEGATKNRKRIGRGIGSGTGKTGGRGVKGQKSRSGVSLN) are disordered. Positions 21 to 35 (RGIGSGTGKTGGRGV) are enriched in gly residues.

Belongs to the universal ribosomal protein uL15 family. As to quaternary structure, part of the 50S ribosomal subunit.

In terms of biological role, binds to the 23S rRNA. The sequence is that of Large ribosomal subunit protein uL15 from Bartonella tribocorum (strain CIP 105476 / IBS 506).